Reading from the N-terminus, the 450-residue chain is tRNA modification GTPase MnmE (450 aa).

The (6S)-5-formyl-5,6,7,8-tetrahydrofolate site is built by Arg24, Glu82, and Lys121. The TrmE-type G domain occupies 218 to 375 (GMHVVLVGQP…LRQVLLEAVG (158 aa)). Asn228 provides a ligand contact to K(+). Residues 228–233 (NVGKSS), 247–253 (TDIAGTT), 272–275 (DTAG), and 356–358 (SAR) contribute to the GTP site. Mg(2+) is bound at residue Ser232. K(+) is bound by residues Thr247, Ile249, and Thr252. Thr253 lines the Mg(2+) pocket. Lys450 is a binding site for (6S)-5-formyl-5,6,7,8-tetrahydrofolate.

It belongs to the TRAFAC class TrmE-Era-EngA-EngB-Septin-like GTPase superfamily. TrmE GTPase family. As to quaternary structure, homodimer. Heterotetramer of two MnmE and two MnmG subunits. K(+) serves as cofactor.

It is found in the cytoplasm. Its function is as follows. Exhibits a very high intrinsic GTPase hydrolysis rate. Involved in the addition of a carboxymethylaminomethyl (cmnm) group at the wobble position (U34) of certain tRNAs, forming tRNA-cmnm(5)s(2)U34. In Laribacter hongkongensis (strain HLHK9), this protein is tRNA modification GTPase MnmE.